We begin with the raw amino-acid sequence, 309 residues long: Aspartate carbamoyltransferase catalytic subunit (309 aa).

Carbamoyl phosphate is bound by residues arginine 55 and threonine 56. Residue lysine 85 coordinates L-aspartate. Arginine 106, histidine 135, and glutamine 138 together coordinate carbamoyl phosphate. Residues arginine 168 and arginine 230 each coordinate L-aspartate. Residues leucine 268 and proline 269 each coordinate carbamoyl phosphate.

The protein belongs to the aspartate/ornithine carbamoyltransferase superfamily. ATCase family. As to quaternary structure, heterododecamer (2C3:3R2) of six catalytic PyrB chains organized as two trimers (C3), and six regulatory PyrI chains organized as three dimers (R2).

The enzyme catalyses carbamoyl phosphate + L-aspartate = N-carbamoyl-L-aspartate + phosphate + H(+). It functions in the pathway pyrimidine metabolism; UMP biosynthesis via de novo pathway; (S)-dihydroorotate from bicarbonate: step 2/3. Its function is as follows. Catalyzes the condensation of carbamoyl phosphate and aspartate to form carbamoyl aspartate and inorganic phosphate, the committed step in the de novo pyrimidine nucleotide biosynthesis pathway. The protein is Aspartate carbamoyltransferase catalytic subunit of Vibrio vulnificus (strain YJ016).